The following is a 146-amino-acid chain: uncharacterized protein (146 aa).

Transmembrane regions (helical) follow at residues 89-111 (AIEM…LLLY) and 121-143 (IGCG…YSVV).

The protein localises to the cell membrane. This is an uncharacterized protein from Archaeoglobus fulgidus (strain ATCC 49558 / DSM 4304 / JCM 9628 / NBRC 100126 / VC-16).